The following is a 336-amino-acid chain: MPMTGFYETISPRDQQRPPIWFLRQVGRYIPQYQELKRNRSLKDFFLDTESIVEATLLGPSLLGVDAAIVFADILSILEGFSVDYRFAPGPEVSYSPHEPLIFTKDPQETFSFLLEAIQQLTKRLTVPLIAFAASPFTLASYLIEGGASRDYPKTIAFLYQYPDRFKALLDEITLGTATYLQMQVQAGAAAIQLFESSSLRLPPHLFAKYVVAPNTKLIRQIKQTGNPPISLFCRCFYQEFLSLYAIGADTLHPDYHVELPEVYRQIHSPGSIQGNFDPALLLLPQDALIAHLEAYLAPLKQQSHYIFNLGHGILPQTPIENVQAVVSCLTSISTS.

Substrate-binding positions include 24-28 (RQVGR), Asp73, Tyr142, Ser197, and His312.

This sequence belongs to the uroporphyrinogen decarboxylase family. As to quaternary structure, homodimer.

It localises to the cytoplasm. The catalysed reaction is uroporphyrinogen III + 4 H(+) = coproporphyrinogen III + 4 CO2. It participates in porphyrin-containing compound metabolism; protoporphyrin-IX biosynthesis; coproporphyrinogen-III from 5-aminolevulinate: step 4/4. Catalyzes the decarboxylation of four acetate groups of uroporphyrinogen-III to yield coproporphyrinogen-III. This chain is Uroporphyrinogen decarboxylase, found in Chlamydia trachomatis serovar L2 (strain ATCC VR-902B / DSM 19102 / 434/Bu).